We begin with the raw amino-acid sequence, 583 residues long: Membrane-bound O-acyltransferase gup1 (583 aa).

At 1-52 (MLRLFRFDVLETSTKDTERPNSKSSRLSSTSGSSHPSSSSRLTVRSAVPEKS) the chain is on the extracellular side. Residues 15–42 (KDTERPNSKSSRLSSTSGSSHPSSSSRL) are disordered. Low complexity predominate over residues 22-40 (SKSSRLSSTSGSSHPSSSS). A helical membrane pass occupies residues 53–73 (AFGSIEFIFYFSVILSILTIA). Over 74-119 (CFKIHYVSSPKHPNYKNIEKYLKPGWLFGQKVDSADFQYSAFRENM) the chain is Cytoplasmic. A helical transmembrane segment spans residues 120-140 (PILLLVIIVYNFLWRLVKLVF). The Extracellular segment spans residues 141-159 (TKNTNDELAIKNNYRLCFS). A helical membrane pass occupies residues 160-180 (LLFALLVYGTGVIYVLTIALI). The Cytoplasmic portion of the chain corresponds to 181-191 (NYLISKSLKNS). A helical membrane pass occupies residues 192–212 (IFNPLLTWTLDISVVFFKEYF). At 213–298 (AYCKFSSLHP…SCLDEDYNLK (86 aa)) the chain is on the extracellular side. The helical transmembrane segment at 299-319 (NFLTYIFYAPLYLAGPIISFN) threads the bilayer. Residues 320–343 (NFMSQMKYPTVSTLKYRNLLYAIR) lie on the Cytoplasmic side of the membrane. A helical transmembrane segment spans residues 344–364 (FLVCVLTMEFLLHYAYVTAIS). Over 365-373 (KDGNWNQYS) the chain is Extracellular. A helical membrane pass occupies residues 374-394 (AVESAMISFIVLFMTWLKLLI). Topologically, residues 395–444 (PWRLFRLWSLIDDIEPPENIVRCMCNNYSAVGFWRAWHRSFNRWLIRYIY) are cytoplasmic. 2 helical membrane passes run 445-465 (VPLG…TFVA) and 466-486 (LWHD…LFIL). Residue H468 is part of the active site. Topologically, residues 487 to 512 (PERLCCFMSRRTGLTKHPYYRYISGF) are cytoplasmic. Residues 513-533 (GAALNIYFMIICNLIGFAVGI) form a helical membrane-spanning segment. Residues 534–549 (DGIKNVLVSFFLTLKG) lie on the Extracellular side of the membrane. A helical transmembrane segment spans residues 550 to 570 (AMSAIAAFIMFFSAVQIMFQI). Topologically, residues 571–583 (RVNEEEEGINLRC) are cytoplasmic.

The protein belongs to the membrane-bound acyltransferase family.

It is found in the cell membrane. The protein resides in the endoplasmic reticulum membrane. Its subcellular location is the mitochondrion membrane. Its function is as follows. Membrane-bound O-acyltransferase involved in the remodeling of glycosylphosphatidylinositol (GPI) anchors. Acts only on GPI-anchored proteins, but not on free GPI lipids. Also involved in lipid metabolism, having profound effects on sphingolipid-sterol-ordered domains integrity and assembly. Involved in cell integrity and apoptosis. The protein is Membrane-bound O-acyltransferase gup1 (gup1) of Schizosaccharomyces pombe (strain 972 / ATCC 24843) (Fission yeast).